A 232-amino-acid polypeptide reads, in one-letter code: Ubiquinone biosynthesis O-methyltransferase (232 aa).

Residues R36, G55, D76, and L120 each contribute to the S-adenosyl-L-methionine site.

Belongs to the methyltransferase superfamily. UbiG/COQ3 family.

It carries out the reaction a 3-demethylubiquinol + S-adenosyl-L-methionine = a ubiquinol + S-adenosyl-L-homocysteine + H(+). It catalyses the reaction a 3-(all-trans-polyprenyl)benzene-1,2-diol + S-adenosyl-L-methionine = a 2-methoxy-6-(all-trans-polyprenyl)phenol + S-adenosyl-L-homocysteine + H(+). The protein operates within cofactor biosynthesis; ubiquinone biosynthesis. O-methyltransferase that catalyzes the 2 O-methylation steps in the ubiquinone biosynthetic pathway. The protein is Ubiquinone biosynthesis O-methyltransferase of Dechloromonas aromatica (strain RCB).